A 292-amino-acid chain; its full sequence is MIRRAVVAGQFYPDDAELVEMLKRFFTDLGEEGNSRRITAGVAPHAGYIFSGYTASRTYKAIYEDGLPEVFVILGPNHTGLGSPIAVYPKGEWETPLGRIKVDEKLARRITELSEIADLDDLAHKYEHSIEVQLPFIQYLAELSGKDVKIVPITLGIQDEEVSYALGKAIYEASQELGRDIVVIASTDFMHYGEFYGYVPFRARADELPNLVKEWDMRVIRRILDFDVEGMFEEINAMNHTMCGPGGVGVGIVYSKLAGAIEAELLHYTTSFEVSRSTDAIVGYASIVMRKA.

It belongs to the MEMO1 family.

The protein is MEMO1 family protein PF1638 of Pyrococcus furiosus (strain ATCC 43587 / DSM 3638 / JCM 8422 / Vc1).